Consider the following 446-residue polypeptide: Histidine--tRNA ligase (446 aa).

It belongs to the class-II aminoacyl-tRNA synthetase family. In terms of assembly, homodimer.

It localises to the cytoplasm. It catalyses the reaction tRNA(His) + L-histidine + ATP = L-histidyl-tRNA(His) + AMP + diphosphate + H(+). This Burkholderia pseudomallei (strain K96243) protein is Histidine--tRNA ligase.